A 34-amino-acid polypeptide reads, in one-letter code: Photosystem II reaction center protein Psb30 (34 aa).

Residues 5 to 25 form a helical membrane-spanning segment; it reads VLFQLTALIFVVAAGPLVIVL.

This sequence belongs to the Psb30/Ycf12 family. In terms of assembly, PSII is composed of 1 copy each of membrane proteins PsbA, PsbB, PsbC, PsbD, PsbE, PsbF, PsbH, PsbI, PsbJ, PsbK, PsbL, PsbM, PsbT, PsbX, PsbY, PsbZ, Psb30/Ycf12, peripheral proteins of the oxygen-evolving complex and a large number of cofactors. It forms dimeric complexes.

The protein resides in the plastid. The protein localises to the chloroplast thylakoid membrane. Functionally, a core subunit of photosystem II (PSII), probably helps stabilize the reaction center. This Tupiella akineta (Green alga) protein is Photosystem II reaction center protein Psb30.